A 255-amino-acid polypeptide reads, in one-letter code: MTVTDNPADTAGEATAGRPAFVSRSVLVTGGNRGIGLAIARRLAADGHKVAVTHRGSGAPDDLFGVQCDVTDSAAVDRAFKEVEEHQGPVEVLVANAGISKDAFLMRMTEERFEEVINTNLTGAFRCAQRASRTMQRKRFGRIIFIGSVSGMWGIGNQANYAAAKAGLIGMARSISRELAKAGVTANVVAPGYIDTEMTRALDERIQAGALDFIPAKRVGTAEEVAGAVSFLASEDASYIAGAVIPVDGGMGMGH.

NADP(+)-binding positions include Asn32–Ile35, Arg55, Asp69–Val70, Gly98, Tyr161, Lys165, Ile194, and Arg205. Tyr161 functions as the Proton acceptor in the catalytic mechanism.

It belongs to the short-chain dehydrogenases/reductases (SDR) family. Homotetramer.

It is found in the secreted. The protein localises to the cell wall. The enzyme catalyses a (3R)-hydroxyacyl-[ACP] + NADP(+) = a 3-oxoacyl-[ACP] + NADPH + H(+). It carries out the reaction a (3R)-3-hydroxyacyl-CoA + NADP(+) = a 3-oxoacyl-CoA + NADPH + H(+). It catalyses the reaction (3R)-3-hydroxybutanoyl-CoA + NADP(+) = acetoacetyl-CoA + NADPH + H(+). The catalysed reaction is (3R)-hydroxyoctanoyl-CoA + NADP(+) = 3-oxooctanoyl-CoA + NADPH + H(+). It functions in the pathway lipid metabolism; mycolic acid biosynthesis. Part of the mycobacterial fatty acid elongation system FAS-II, which is involved in mycolic acid biosynthesis. Catalyzes the NADPH-dependent reduction of beta-ketoacyl derivatives, the second step of the FAS-II elongation cycle. Has a preference for longer substrates. Can use CoA derivatives as substrates in vitro. The chain is 3-oxoacyl-[acyl-carrier-protein] reductase MabA from Mycolicibacterium smegmatis (strain ATCC 700084 / mc(2)155) (Mycobacterium smegmatis).